The primary structure comprises 453 residues: Allantoinase (453 aa).

Positions 59, 61, 146, 186, 242, and 315 each coordinate Zn(2+). K146 carries the N6-carboxylysine modification.

This sequence belongs to the metallo-dependent hydrolases superfamily. Allantoinase family. As to quaternary structure, homotetramer. It depends on Zn(2+) as a cofactor. Post-translationally, carboxylation allows a single lysine to coordinate two zinc ions.

It catalyses the reaction (S)-allantoin + H2O = allantoate + H(+). The protein operates within nitrogen metabolism; (S)-allantoin degradation; allantoate from (S)-allantoin: step 1/1. Functionally, catalyzes the conversion of allantoin (5-ureidohydantoin) to allantoic acid by hydrolytic cleavage of the five-member hydantoin ring. This is Allantoinase from Escherichia coli O9:H4 (strain HS).